The following is a 186-amino-acid chain: Ribosome-recycling factor (186 aa).

The protein belongs to the RRF family.

It is found in the cytoplasm. In terms of biological role, responsible for the release of ribosomes from messenger RNA at the termination of protein biosynthesis. May increase the efficiency of translation by recycling ribosomes from one round of translation to another. This chain is Ribosome-recycling factor, found in Nitratidesulfovibrio vulgaris (strain DP4) (Desulfovibrio vulgaris).